The following is a 201-amino-acid chain: MAIGYPNGKKYAASQEELPQQKRKAPVTYGKRGMSLEDDLNDTIAYYLTHEIAVIHKKPTPVQIVSVDYPKRSSAKIKEAYFKTPSTTDYNGVYKGKYVDFEAKETQNTTSFPLSNFHDHQMTHMANVLKQDGIVFVIIAFQKLGETHFIPFEKFYPFWERMQSGGRKSVTIAEIQDVSDQIPYGLNPRLDFLQSIDKLYF.

The disordered stretch occupies residues Met1 to Pro26. Mg(2+) contacts are provided by Thr87, Asp89, Glu102, and Gln121.

The protein belongs to the RecU family. Requires Mg(2+) as cofactor.

The protein resides in the cytoplasm. It catalyses the reaction Endonucleolytic cleavage at a junction such as a reciprocal single-stranded crossover between two homologous DNA duplexes (Holliday junction).. Endonuclease that resolves Holliday junction intermediates in genetic recombination. Cleaves mobile four-strand junctions by introducing symmetrical nicks in paired strands. Promotes annealing of linear ssDNA with homologous dsDNA. Required for DNA repair, homologous recombination and chromosome segregation. The sequence is that of Holliday junction resolvase RecU from Listeria monocytogenes serotype 4a (strain HCC23).